We begin with the raw amino-acid sequence, 352 residues long: MVFRIASSPYTHNQRQTSRIMLLVLLAAVPGIAAQLWFFGWGTLVQILLASVSALLAEALVLKLRKQSVAATLKDNSALLTGLLLAVSIPPLAPWWMVVLGTVFAVIIAKQLYGGLGQNPFNPAMIGYVVLLISFPVQMTSWLPPHEIAVNIPGFIDAIQVIFSGHTASGGDMNTLRLGIDGISQATPLDTFKTSVRAGHSVEQIMQYPIYSGILAGAGWQWVNLAWLAGGLWLLWQKAIRWHIPLSFLVTLALCATLGWLFSPETLAAPQIHLLSGATMLGAFFILTDPVTASTTNRGRLIFGALAGLLVWLIRSFGGYPDGVAFAVLLANITVPLIDYYTRPRVYGHRKG.

The next 5 membrane-spanning stretches (helical) occupy residues 20-40 (IMLL…WFFG), 42-62 (GTLV…ALVL), 78-109 (ALLT…VIIA), 123-143 (PAMI…TSWL), and 148-168 (IAVN…GHTA). Thr-187 is modified (FMN phosphoryl threonine). Transmembrane regions (helical) follow at residues 214-234 (ILAG…GLWL), 242-262 (WHIP…GWLF), 267-287 (LAAP…FFIL), 301-321 (LIFG…GGYP), and 322-342 (DGVA…DYYT).

Belongs to the NqrB/RnfD family. The complex is composed of six subunits: RsxA, RsxB, RsxC, RsxD, RsxE and RsxG. It depends on FMN as a cofactor.

It localises to the cell inner membrane. Functionally, part of a membrane-bound complex that couples electron transfer with translocation of ions across the membrane. Required to maintain the reduced state of SoxR. This is Ion-translocating oxidoreductase complex subunit D from Escherichia coli (strain SE11).